We begin with the raw amino-acid sequence, 474 residues long: ATP synthase subunit beta (474 aa).

Position 153 to 160 (153 to 160) interacts with ATP; the sequence is GGAGVGKT.

Belongs to the ATPase alpha/beta chains family. In terms of assembly, F-type ATPases have 2 components, CF(1) - the catalytic core - and CF(0) - the membrane proton channel. CF(1) has five subunits: alpha(3), beta(3), gamma(1), delta(1), epsilon(1). CF(0) has three main subunits: a(1), b(2) and c(9-12). The alpha and beta chains form an alternating ring which encloses part of the gamma chain. CF(1) is attached to CF(0) by a central stalk formed by the gamma and epsilon chains, while a peripheral stalk is formed by the delta and b chains.

The protein localises to the cell inner membrane. The catalysed reaction is ATP + H2O + 4 H(+)(in) = ADP + phosphate + 5 H(+)(out). Functionally, produces ATP from ADP in the presence of a proton gradient across the membrane. The catalytic sites are hosted primarily by the beta subunits. The sequence is that of ATP synthase subunit beta from Neorickettsia sennetsu (strain ATCC VR-367 / Miyayama) (Ehrlichia sennetsu).